The following is a 487-amino-acid chain: MKPSTEWWRYLAPLAVIAIIALIPVPAGLESHTWLYFAVFTGVIVGLILEPVPGAVVAMVGISIIAILSPWLLFSPEQLAQPGFKFTAKSLSWAVSGFSNSVIWLIFAAFMFGTGYEKNGLGRRIALILVKKMGHRTLFLGYAVMFSELILAPVTPSNSARGAGIIYPIIRNLPPLYQLQPNDSSSRSIGSYIMWIGIVADCVTSAIFLTAMAPNLLLIGLMKSASHATLSWGDWFLGMLPLSILLVLLVPRLAYVLYPPVLKSGDQVPRWAETELQAMGPLCSREKRMLGLMVGALVLWIFGGDYIDAAMVGYSVVALMLLLRIISWDDIVSNKAAWNVFFWLASLITLATGLNNTGFISWFGKLLAGSLSGYSPTMVMVALIVVFYLLRYFFASATAYTSALAPMMIAAALAMPEIPLPVFCLMVGAAIGLGSILTPYATGPSPIYYGSGYLPTADYWRLGAIFGLIFLVLLVITGLLWMPVVLL.

14 helical membrane-spanning segments follow: residues Y10 to E30, T33 to P53, G54 to F74, W93 to G113, T137 to S157, I189 to L209, L230 to V250, L292 to V312, G313 to S333, V340 to I360, S370 to L390, F393 to L413, I418 to T438, and I465 to V485.

This sequence belongs to the SLC13A/DASS transporter (TC 2.A.47) family. DIT1 subfamily.

The protein resides in the cell inner membrane. It carries out the reaction (2R,3R)-tartrate(out) + succinate(in) = (2R,3R)-tartrate(in) + succinate(out). Its function is as follows. Catalyzes the uptake of tartrate in exchange for intracellular succinate. Essential for anaerobic L-tartrate fermentation. This is L-tartrate/succinate antiporter (ttdT) from Shigella dysenteriae serotype 1 (strain Sd197).